Here is a 212-residue protein sequence, read N- to C-terminus: ATP phosphoribosyltransferase (212 aa).

The protein belongs to the ATP phosphoribosyltransferase family. Short subfamily. Heteromultimer composed of HisG and HisZ subunits.

The protein localises to the cytoplasm. The catalysed reaction is 1-(5-phospho-beta-D-ribosyl)-ATP + diphosphate = 5-phospho-alpha-D-ribose 1-diphosphate + ATP. It functions in the pathway amino-acid biosynthesis; L-histidine biosynthesis; L-histidine from 5-phospho-alpha-D-ribose 1-diphosphate: step 1/9. Its function is as follows. Catalyzes the condensation of ATP and 5-phosphoribose 1-diphosphate to form N'-(5'-phosphoribosyl)-ATP (PR-ATP). Has a crucial role in the pathway because the rate of histidine biosynthesis seems to be controlled primarily by regulation of HisG enzymatic activity. This is ATP phosphoribosyltransferase from Prochlorococcus marinus (strain MIT 9312).